A 244-amino-acid polypeptide reads, in one-letter code: 1-(5-phosphoribosyl)-5-[(5-phosphoribosylamino)methylideneamino] imidazole-4-carboxamide isomerase (244 aa).

Asp8 functions as the Proton acceptor in the catalytic mechanism. Catalysis depends on Asp129, which acts as the Proton donor.

Belongs to the HisA/HisF family.

Its subcellular location is the cytoplasm. The enzyme catalyses 1-(5-phospho-beta-D-ribosyl)-5-[(5-phospho-beta-D-ribosylamino)methylideneamino]imidazole-4-carboxamide = 5-[(5-phospho-1-deoxy-D-ribulos-1-ylimino)methylamino]-1-(5-phospho-beta-D-ribosyl)imidazole-4-carboxamide. It participates in amino-acid biosynthesis; L-histidine biosynthesis; L-histidine from 5-phospho-alpha-D-ribose 1-diphosphate: step 4/9. The sequence is that of 1-(5-phosphoribosyl)-5-[(5-phosphoribosylamino)methylideneamino] imidazole-4-carboxamide isomerase from Thermodesulfovibrio yellowstonii (strain ATCC 51303 / DSM 11347 / YP87).